The chain runs to 163 residues: 3-isopropylmalate dehydratase small subunit (163 aa).

It belongs to the LeuD family. LeuD type 2 subfamily. In terms of assembly, heterodimer of LeuC and LeuD.

The enzyme catalyses (2R,3S)-3-isopropylmalate = (2S)-2-isopropylmalate. Its pathway is amino-acid biosynthesis; L-leucine biosynthesis; L-leucine from 3-methyl-2-oxobutanoate: step 2/4. Its function is as follows. Catalyzes the isomerization between 2-isopropylmalate and 3-isopropylmalate, via the formation of 2-isopropylmaleate. In Brachyspira hyodysenteriae (strain ATCC 49526 / WA1), this protein is 3-isopropylmalate dehydratase small subunit.